The following is a 702-amino-acid chain: Polyribonucleotide nucleotidyltransferase (702 aa).

Residues Asp-485 and Asp-491 each contribute to the Mg(2+) site. In terms of domain architecture, KH spans 552–611; the sequence is PRITTLKINPEKIRDVIGKGGATIRALTEETGTTIELEDDGTVKIASANGEATKEAIRRI. An S1 motif domain is found at 621 to 689; the sequence is GTVYNGKVVR…RQGRVRLSMK (69 aa).

The protein belongs to the polyribonucleotide nucleotidyltransferase family. As to quaternary structure, component of the RNA degradosome, which is a multiprotein complex involved in RNA processing and mRNA degradation. Requires Mg(2+) as cofactor.

The protein resides in the cytoplasm. The catalysed reaction is RNA(n+1) + phosphate = RNA(n) + a ribonucleoside 5'-diphosphate. Involved in mRNA degradation. Catalyzes the phosphorolysis of single-stranded polyribonucleotides processively in the 3'- to 5'-direction. In Shewanella woodyi (strain ATCC 51908 / MS32), this protein is Polyribonucleotide nucleotidyltransferase.